The following is a 308-amino-acid chain: Probable serine/threonine-protein kinase KIN28 homolog (308 aa).

Residues 4 to 294 (YIRERRLGEG…CDDAIKHPYF (291 aa)) form the Protein kinase domain. Residues 10 to 18 (LGEGTYAVI) and Lys-46 each bind ATP. Asp-139 functions as the Proton acceptor in the catalytic mechanism.

It belongs to the protein kinase superfamily. CMGC Ser/Thr protein kinase family. CDC2/CDKX subfamily. Component of the TFIIH holo complex.

It is found in the nucleus. The catalysed reaction is [DNA-directed RNA polymerase] + ATP = phospho-[DNA-directed RNA polymerase] + ADP + H(+). Its function is as follows. Protein kinase component of transcription factor IIH (TFIIH) which phosphorylates the C-terminal domain of RNA polymerase II during transition from transcription to elongation after preinitiation complex (PIC) formation, thereby positively regulating transcription. Essential for both basal and activated transcription, and is involved in nucleotide excision repair (NER) of damaged DNA. This chain is Probable serine/threonine-protein kinase KIN28 homolog (KIN28), found in Encephalitozoon cuniculi (strain GB-M1) (Microsporidian parasite).